Consider the following 274-residue polypeptide: Syntaxin-12 (274 aa).

The segment at 1 to 20 (MSYGPLDMYRNPGPSGPQPR) is disordered. S2 is modified (N-acetylserine). The Cytoplasmic segment spans residues 2 to 250 (SYGPLDMYRN…AYYQKKSRKK (249 aa)). Positions 34 to 80 (QRISQATAQIKNLMSQLGTKQDSSKLQENLQQFQHSTNQLAKETNEL) form a coiled coil. The tract at residues 128-150 (EKESIARARAGSRLSAEDRQREE) is disordered. S139, S142, S218, and S225 each carry phosphoserine. Residues 178–240 (LELIKERETA…ERASDQLQRA (63 aa)) form the t-SNARE coiled-coil homology domain. Residues 251-271 (MCILVLVLSVIVTVLVVVIWV) traverse the membrane as a helical; Anchor for type IV membrane protein segment. The Vesicular portion of the chain corresponds to 272–274 (ASK).

It belongs to the syntaxin family. In terms of assembly, associates with the BLOC-1 complex. Interacts with BLOC1S6. Interacts with NAPA and SNAP23. Identified in a complex containing STX6, STX12, VAMP4 and VTI1A. Interacts with GRIPAP1. Forms a complex with GRIP1, GRIA2 and NSG1; controls the intracellular fate of AMPAR and the endosomal sorting of the GRIA2 subunit toward recycling and membrane targeting. Interacts with NSG1. Interacts with TPC1. Interacts (via N-terminus) with VPS13B. Ubiquitous. Highly expressed in brain.

The protein localises to the endosome membrane. It is found in the golgi apparatus membrane. Its subcellular location is the endomembrane system. The protein resides in the early endosome membrane. It localises to the recycling endosome membrane. Its function is as follows. SNARE promoting fusion of transport vesicles with target membranes. Together with SNARE STX6, promotes movement of vesicles from endosomes to the cell membrane, and may therefore function in the endocytic recycling pathway. Through complex formation with GRIP1, GRIA2 and NSG1 controls the intracellular fate of AMPAR and the endosomal sorting of the GRIA2 subunit toward recycling and membrane targeting. The sequence is that of Syntaxin-12 (Stx12) from Rattus norvegicus (Rat).